The chain runs to 449 residues: Jacalin-related lectin 20 (449 aa).

Disordered regions lie at residues 1-20 and 294-314; these read MAQR…DDGA and APPI…GDGG. Alanine 2 is subject to N-acetylalanine. 3 Jacalin-type lectin domains span residues 2 to 144, 147 to 294, and 303 to 446; these read AQRL…YFTP, PIKQ…HFGA, and TEKL…TVAP.

It belongs to the jacalin lectin family.

This is Jacalin-related lectin 20 (JAL20) from Arabidopsis thaliana (Mouse-ear cress).